The chain runs to 433 residues: D-amino acid dehydrogenase (433 aa).

3 to 17 lines the FAD pocket; the sequence is VLVLGSGVIGTTSAY.

This sequence belongs to the DadA oxidoreductase family. FAD serves as cofactor.

It catalyses the reaction a D-alpha-amino acid + A + H2O = a 2-oxocarboxylate + AH2 + NH4(+). The protein operates within amino-acid degradation; D-alanine degradation; NH(3) and pyruvate from D-alanine: step 1/1. In terms of biological role, oxidative deamination of D-amino acids. This Pseudomonas savastanoi pv. phaseolicola (strain 1448A / Race 6) (Pseudomonas syringae pv. phaseolicola (strain 1448A / Race 6)) protein is D-amino acid dehydrogenase.